The sequence spans 111 residues: Universal stress protein B (111 aa).

The next 2 membrane-spanning stretches (helical) occupy residues 1–21 (MINT…NMLR) and 90–110 (FILT…LMLW).

Belongs to the universal stress protein B family.

The protein resides in the cell inner membrane. This is Universal stress protein B from Edwardsiella ictaluri (strain 93-146).